A 362-amino-acid chain; its full sequence is MDRPAVSGPMDLPIMHDSDRYELVKDIGSGNFGVARLMRDKQSNELVAVKYIERGEKIDENVKREIINHRSLRHPNIVRFKEVILTPTHLAIVMEYASGGELFERICNAGRFSEDEARFFFQQLISGVSYCHAMQVCHRDLKLENTLLDGSPAPRLKICDFGYSKSSVLHSQPKSTVGTPAYIAPEVLLKKEYDGKVADVWSCGVTLYVMLVGAYPFEDPEEPKNFRKTIHRILNVQYAIPDYVHISPECRHLISRIFVADPAKRISIPEIRNHEWFLKNLPADLMNDNTMTTQFDESDQPGQSIEEIMQIIAEATVPPAGTQNLNHYLTGSLDIDDDMEEDLESDLDDLDIDSSGEIVYAM.

Residues S7, S18, S29, and S43 each carry the phosphoserine; by autocatalysis modification. Positions 21 to 277 (YELVKDIGSG…IPEIRNHEWF (257 aa)) constitute a Protein kinase domain. 27–35 (IGSGNFGVA) lines the ATP pocket. Residue K50 participates in ATP binding. D140 (proton acceptor) is an active-site residue. Positions 160-186 (DFGYSKSSVLHSQPKSTVGTPAYIAPE) are activation loop. Position 175 is a phosphoserine (S175). The segment at 283 to 318 (ADLMNDNTMTTQFDESDQPGQSIEEIMQIIAEATVP) is domain I; osmotic stress response, required for the kinase activity. The interval 319-362 (PAGTQNLNHYLTGSLDIDDDMEEDLESDLDDLDIDSSGEIVYAM) is domain II; ABA response and ABI1 binding.

It belongs to the protein kinase superfamily. Ser/Thr protein kinase family. As to quaternary structure, interacts with ABI1, PP2CA and SLAC1. Interacts with B'ALPHA, B'BETA, B'DELTA, PP2AA2, PP2AA3, PP2A1 and PP2A2. Associates with MAPKKK18 within the nucleus. Interacts with I-2, TOPP1 and TOPP2. Interacts with ABI2. Autophosphorylation on residues Ser-7, Ser-18, Ser-29, Ser-43, Ser-175 and/or Thr-176. Only the phosphorylation of Ser-175 is crucial for the kinase activity. The phosphorylation of Ser-43 may repress the ABA signaling pathway in absence of ABA. As to expression, expressed in seedlings, leaves, flowers, stems, and roots, but restricted to guard cells and vascular tissue.

The protein resides in the nucleus. It carries out the reaction L-seryl-[protein] + ATP = O-phospho-L-seryl-[protein] + ADP + H(+). It catalyses the reaction L-threonyl-[protein] + ATP = O-phospho-L-threonyl-[protein] + ADP + H(+). With respect to regulation, kinase activity enhanced by ABA and low humidity. Repressed by PP2CA independently of its phosphatase activity. Probably inactivated by ABI1. Repressed by TOPP1. Negatively regulated by ABI2. Activator of the abscisic acid (ABA) signaling pathway that regulates numerous ABA responses, such as stomata closure in response to drought, darkness, high CO(2), plant pathogens, or decreases in atmospheric relative humidity (RH). Involved in the resistance to drought by avoiding water loss. Required for the stomata closure mediated by pathogen-associated molecular pattern (PAMPs) (e.g. flg22 and LPS) of pathogenic bacteria such as P.syringae pv. tomato (Pst) and E.coli O157:H7. As a plant defense process, stomata are closed transiently in order to limit invaders, but actively reopened by bacteria after a few hours; virulent strains (e.g. Pst DC3000) are more efficient than avirulent strains (e.g. Pst DC3000 AvrRpt2) in reopening stomata. Mediates the phosphorylation and activation of the S-type anion efflux channel SLAC1, and thus promotes stomata closure. Essential for stomatal closure in response to reactive oxygen species (ROS). Promotes MAPKKK18 activity upon abscisic acid (ABA) treatment. The sequence is that of Serine/threonine-protein kinase SRK2E from Arabidopsis thaliana (Mouse-ear cress).